Consider the following 130-residue polypeptide: Transcription antitermination protein NusB (130 aa).

This sequence belongs to the NusB family.

Its function is as follows. Involved in transcription antitermination. Required for transcription of ribosomal RNA (rRNA) genes. Binds specifically to the boxA antiterminator sequence of the ribosomal RNA (rrn) operons. This chain is Transcription antitermination protein NusB, found in Bacillus anthracis (strain A0248).